The chain runs to 82 residues: Putative Fe(2+) transport protein A (82 aa).

The protein belongs to the FeoA family.

Might be involved in Fe(2+) ion uptake. The polypeptide is Putative Fe(2+) transport protein A (Methanocaldococcus jannaschii (strain ATCC 43067 / DSM 2661 / JAL-1 / JCM 10045 / NBRC 100440) (Methanococcus jannaschii)).